Reading from the N-terminus, the 471-residue chain is Vanillate/3-O-methylgallate O-demethylase (471 aa).

Position 31 (tyrosine 31) interacts with substrate. Position 57 (glutamine 57) interacts with (6S)-5,6,7,8-tetrahydrofolate. Histidine 60 is a binding site for substrate. (6S)-5,6,7,8-tetrahydrofolate contacts are provided by glutamine 93 and valine 120. Arginine 122 contacts substrate. Glutamine 165 and glutamate 215 together coordinate (6S)-5,6,7,8-tetrahydrofolate. 247–250 is a substrate binding site; that stretch reads YPSN. Residue tryptophan 256 participates in (6S)-5,6,7,8-tetrahydrofolate binding.

This sequence belongs to the GcvT family. Homodimer.

It carries out the reaction vanillate + (6S)-5,6,7,8-tetrahydrofolate = (6S)-5-methyl-5,6,7,8-tetrahydrofolate + 3,4-dihydroxybenzoate. The catalysed reaction is 3-O-methylgallate + (6S)-5,6,7,8-tetrahydrofolate = 3,4,5-trihydroxybenzoate + (6S)-5-methyl-5,6,7,8-tetrahydrofolate. It participates in secondary metabolite metabolism; lignin degradation. Its function is as follows. Involved in the catabolism of vanillate and syringate. Catalyzes the transfer of a methyl moiety from vanillate or 3-O-methylgallate (3MGA) to tetrahydrofolate, forming protocatechuate (PCA) or gallate, respectively, and methyl-tetrahydrofolate. Has similar activities with both substrates. Cannot use syringate. Uses an ordered, sequential kinetic mechanism. The chain is Vanillate/3-O-methylgallate O-demethylase from Sphingobium sp. (strain NBRC 103272 / SYK-6).